The chain runs to 129 residues: uncharacterized protein (129 aa).

3 helical membrane passes run 49 to 69 (LWSL…IVGV), 72 to 92 (FTIF…NLIF), and 101 to 118 (YFNC…NLLQ).

The protein localises to the membrane. This is an uncharacterized protein from Saccharomyces cerevisiae (strain ATCC 204508 / S288c) (Baker's yeast).